The following is a 625-amino-acid chain: Phosphomethylpyrimidine synthase (625 aa).

Residues asparagine 231, methionine 260, tyrosine 289, histidine 325, serine 345–glycine 347, aspartate 386–arginine 389, and glutamate 425 contribute to the substrate site. Histidine 429 provides a ligand contact to Zn(2+). Residue tyrosine 452 participates in substrate binding. Histidine 493 is a Zn(2+) binding site. [4Fe-4S] cluster is bound by residues cysteine 573, cysteine 576, and cysteine 581.

It belongs to the ThiC family. As to quaternary structure, homodimer. [4Fe-4S] cluster serves as cofactor.

It catalyses the reaction 5-amino-1-(5-phospho-beta-D-ribosyl)imidazole + S-adenosyl-L-methionine = 4-amino-2-methyl-5-(phosphooxymethyl)pyrimidine + CO + 5'-deoxyadenosine + formate + L-methionine + 3 H(+). Its pathway is cofactor biosynthesis; thiamine diphosphate biosynthesis. In terms of biological role, catalyzes the synthesis of the hydroxymethylpyrimidine phosphate (HMP-P) moiety of thiamine from aminoimidazole ribotide (AIR) in a radical S-adenosyl-L-methionine (SAM)-dependent reaction. The chain is Phosphomethylpyrimidine synthase from Acinetobacter baumannii (strain SDF).